A 552-amino-acid polypeptide reads, in one-letter code: Non-structural protein NS1 (552 aa).

The sequence is that of Non-structural protein NS1 (Segment-5) from Bluetongue virus 1 (isolate South Africa) (BTV 1).